The following is a 1308-amino-acid chain: Chromosome partition protein Smc (1308 aa).

34-41 (PNGCGKSN) contributes to the ATP binding site. Residues 115-181 (AAREASMEEV…VAEGQPSDAQ (67 aa)) are disordered. Over residues 137-169 (TEAEATEQQAAPSEGAAPTTEATAPSTENEAAP) the composition is skewed to low complexity. Residues 278-600 (ITKYKTKKRL…DTLRAEYATL (323 aa)) are a coiled coil. The SMC hinge domain maps to 637-757 (AGVLADFLEV…VPDPAIGREL (121 aa)). 2 coiled-coil regions span residues 791 to 1046 (SLKR…ELHA) and 1110 to 1148 (MALE…EIDQ).

Belongs to the SMC family. As to quaternary structure, homodimer.

It is found in the cytoplasm. Its function is as follows. Required for chromosome condensation and partitioning. This is Chromosome partition protein Smc from Koribacter versatilis (strain Ellin345).